A 204-amino-acid chain; its full sequence is Probable dTDP-4-oxo-2,6-dideoxy-D-glucose 3,5-epimerase (204 aa).

Substrate contacts are provided by residues arginine 21, glutamate 26, 45–47, lysine 70, and histidine 117; that span reads QAN. The active-site Proton donor is the tyrosine 130. Residue glutamate 141 participates in substrate binding. The disordered stretch occupies residues 164–204; that stretch reads VGEGTPTHRPWRRPRRPGILPDYEGVPGALHRGGGRRGTGP.

Belongs to the dTDP-4-dehydrorhamnose 3,5-epimerase family.

The protein operates within antibiotic biosynthesis. Involved in the biosynthesis of one of the two 2,6-deoxysugars, dTDP-L-oleandrose, attached to the macrolactone ring oleandolide to produce the aglycone antibiotic oleandomycin. Probably catalyzes the conversion of dTDP-4-keto-2,6-dideoxy-alpha-D-glucose to dTDP-4-keto-2,6-dideoxy-beta-L-galactose. This chain is Probable dTDP-4-oxo-2,6-dideoxy-D-glucose 3,5-epimerase, found in Streptomyces antibioticus.